A 170-amino-acid polypeptide reads, in one-letter code: MGNETSLPMDMCSNFDADEIRRLGKRFRKLDLDNSGALSIDEFMSLPELQQNPLVQRVIDIFDADGNGEVDFKEFIQGVSQFSVRGDKLSKLRFAFRIYDMDNDGYISNGELFQVLKMMVGNNLKDTQLQQIVDKTICFADKDEDGKISFDEFCSVVGNTDIHKKMVVDV.

4 consecutive EF-hand domains span residues 18–46 (DEIR…FMSL), 50–85 (QQNP…FSVR), 87–122 (DKLS…MVGN), and 128–163 (QLQQ…TDIH). Ca(2+)-binding residues include aspartate 31, aspartate 33, serine 35, glutamate 42, aspartate 63, aspartate 65, asparagine 67, glutamate 69, glutamate 74, aspartate 100, aspartate 102, aspartate 104, tyrosine 106, glutamate 111, aspartate 141, aspartate 143, aspartate 145, lysine 147, and glutamate 152.

This sequence belongs to the calcineurin regulatory subunit family. As to quaternary structure, composed of two components (A and B), the A component is the catalytic subunit and the B component confers calcium sensitivity.

Calcineurin is a calcium-binding and calmodulin-binding protein found in all cells from yeast to mammals, and a calcium-dependent, calmodulin-stimulated protein phosphatase. This chain is Calcineurin subunit B type 1 (CanB), found in Drosophila melanogaster (Fruit fly).